We begin with the raw amino-acid sequence, 912 residues long: WD repeat-containing protein 44 (912 aa).

3 disordered regions span residues 206-352 (DIIE…ELTD), 399-426 (SNDAAQSDDEEKPQSHQSETDGGKLKQK), and 460-481 (RDEVFHTDQDDPSSSDDEGMPY). Residues 236-258 (NRPPQPINAPPPRPPPPARPAPP) show a composition bias toward pro residues. The span at 264–278 (GDTDFDRSSGFEYQK) shows a compositional bias: basic and acidic residues. Residues 288 to 311 (SPNTLTENMNRDSQPSLDLASATS) are compositionally biased toward polar residues. A compositionally biased stretch (basic and acidic residues) spans 410-422 (KPQSHQSETDGGK). Acidic residues predominate over residues 469-478 (DDPSSSDDEG). The stretch at 511–550 (EHVGAVWTMKFSHCGRLLASAGQDNVVRIWVLKNAFDYFN) is one WD 1 repeat. The interval 559–594 (EGRVSPSPSQESLNSSKSDTDGGVFSGTDDVDPDDK) is disordered. Residues 563 to 575 (SPSPSQESLNSSK) show a composition bias toward low complexity. WD repeat units lie at residues 608-646 (GHTADLLDLSWSKNYFLLSSSMDKTVRLWHISRRECLCC), 648-688 (QHID…VALW), 693-732 (GQTKLITAANFCQNGKHAVIGTYDGRCIFYDTEHLKYHTQ), 743-782 (RVGRKITGIEPLPGENKILVTSNDSRIRLYDLRDLSLSMK), 787-826 (VNSSSQIKASFSHDFTYIVSGSEDKYVYIWSTYHDLSKFT), 841-880 (AHNAVVTSAIFAPNPGLMVSAETSSEKQEGDQAEPVENIP), and 882-912 (GALKSDHTEVLLSADFTGAIKVFINKKKNIS). The tract at residues 861 to 882 (AETSSEKQEGDQAEPVENIPSG) is disordered.

The protein resides in the cytoplasm. The protein localises to the cytosol. It localises to the perinuclear region. It is found in the endosome membrane. Its subcellular location is the golgi apparatus. The protein resides in the trans-Golgi network. Downstream effector for rab11. May be involved in vesicle recycling. May also be involved in the inhibition of the intracellular ciliogenesis pathway. The chain is WD repeat-containing protein 44 (wdr44) from Xenopus laevis (African clawed frog).